The sequence spans 160 residues: Cytochrome b6-f complex subunit 4 (160 aa).

The next 3 helical transmembrane spans lie at 36-56 (IFYM…GLAV), 96-116 (LGVL…FIKI), and 131-151 (TVFL…ALPI).

Belongs to the cytochrome b family. PetD subfamily. As to quaternary structure, the 4 large subunits of the cytochrome b6-f complex are cytochrome b6, subunit IV (17 kDa polypeptide, petD), cytochrome f and the Rieske protein, while the 4 small subunits are petG, petL, petM and petN. The complex functions as a dimer.

The protein localises to the plastid. It is found in the chloroplast thylakoid membrane. Functionally, component of the cytochrome b6-f complex, which mediates electron transfer between photosystem II (PSII) and photosystem I (PSI), cyclic electron flow around PSI, and state transitions. The sequence is that of Cytochrome b6-f complex subunit 4 from Auxenochlorella protothecoides (Green microalga).